A 706-amino-acid polypeptide reads, in one-letter code: Glycine--tRNA ligase beta subunit (706 aa).

Belongs to the class-II aminoacyl-tRNA synthetase family. Tetramer of two alpha and two beta subunits.

It localises to the cytoplasm. The enzyme catalyses tRNA(Gly) + glycine + ATP = glycyl-tRNA(Gly) + AMP + diphosphate. The protein is Glycine--tRNA ligase beta subunit of Hyphomonas neptunium (strain ATCC 15444).